The chain runs to 95 residues: Small ribosomal subunit protein uS19 (95 aa).

Belongs to the universal ribosomal protein uS19 family.

Its function is as follows. Protein S19 forms a complex with S13 that binds strongly to the 16S ribosomal RNA. The protein is Small ribosomal subunit protein uS19 of Clostridium kluyveri (strain NBRC 12016).